We begin with the raw amino-acid sequence, 233 residues long: Clathrin light chain (233 aa).

Residues 1-124 (MSEKFPPLED…EDRSEVVDQW (124 aa)) form a disordered region. Residues 17-43 (PNDKKDDDTDFLKREAEILGDEFKTEQ) show a composition bias toward basic and acidic residues. Position 49 is a phosphothreonine (T49). S52 is modified (phosphoserine). The span at 56 to 67 (DDDEIRDFEEQF) shows a compositional bias: acidic residues. The span at 69–92 (DINSANGAVSSDQNGSATVSSGND) shows a compositional bias: polar residues. Over residues 112-124 (SVKEDRSEVVDQW) the composition is skewed to basic and acidic residues. Residues 125–186 (KQRRAVEIHE…EAFLKKRDEF (62 aa)) adopt a coiled-coil conformation. The involved in binding clathrin heavy chain stretch occupies residues 144–204 (KELQDEAIKH…DRALQLINQD (61 aa)).

This sequence belongs to the clathrin light chain family. As to quaternary structure, clathrin coats are formed from molecules containing 3 heavy chains and 3 light chains. Interacts with the auxilin-like clathrin uncoating factor SWA2.

The protein resides in the cytoplasmic vesicle membrane. It localises to the membrane. It is found in the coated pit. Clathrin is the major protein of the polyhedral coat of coated pits and vesicles. In yeast, it is involved in the retention of proteins in an intracellular membrane compartment, presumably the trans-Golgi. The yeast light chain is important for cell growth. The light chain may help to properly orient the assembly/ disassembly of the clathrin coats. This is Clathrin light chain (CLC1) from Saccharomyces cerevisiae (strain ATCC 204508 / S288c) (Baker's yeast).